Here is a 494-residue protein sequence, read N- to C-terminus: MSASKHIICEYSSEDPSKDFEVHNPATGAVIAIVRAGDATTLDKAVQVAHKAFLEWKKVPLTRRSQLMFKCAEEVEKHAEELAELLTTENGKLLSDGRMVDVNFVSQVYRYFGSLIDKLPGEFHDSGSVYRYVTREPHGVCGGILPFNWPPIHTAGKSAPCIAMGNTIIIKPGEQAPLTSMRIVDILNTVLPKGVVQYVPGVGPEVPQALTAHPLVKMVSITGSTTAGKAVVMAASALVKPTVLELGGKNALVVFPDADLHRAARDALEGAFFNKGEACTATSRLLIHNDIYDAFIEKYAAAVCKLQAGNGLKKGTHVGPCVTQAQKERVLDFIRIGEEEGATIAAQGRLPDDAEEKDGFFVAPTLFTNVKHSMRIAQEEIFGPVVTACKFDSEEEAVSIINGARWGLTCAIYSGNQELALRMCRQVDVGMTFINNYFRNTLGIPFGGVKETGYGREHCIDTLKDWSTSKVIQMPSGLAPVPSWPPVNELLPWQ.

Residue 223–228 (GSTTAG) participates in NAD(+) binding. Residues Glu245 and Cys279 contribute to the active site.

It belongs to the aldehyde dehydrogenase family.

It catalyses the reaction an aldehyde + NAD(+) + H2O = a carboxylate + NADH + 2 H(+). The protein operates within mycotoxin biosynthesis. Aldehyde dehydrogenase; part of the gene cluster that mediates the biosynthesis of the selective antifungal agent ascochitine, an o-quinone methide that plays a possible protective role against other microbial competitors in nature and is considered to be important for pathogenicity of legume-associated Didymella species. The pathway probably begins with the synthesis of a keto-aldehyde intermediate by the ascochitine non-reducing polyketide synthase pksAC from successive condensations of 4 malonyl-CoA units, presumably with a simple acetyl-CoA starter unit. Release of the keto-aldehyde intermediate is consistent with the presence of the C-terminal reductive release domain. The HR-PKS (orf7) probably makes a diketide starter unit which is passed to the non-reducing polyketide synthase pksAC for further extension, producing ascochital and ascochitine. The aldehyde dehydrogenase (orf1), the 2-oxoglutarate-dependent dioxygenase (orf3) and the dehydrogenase (orf9) are probably involved in subsequent oxidations of methyl groups to the carboxylic acid of the heterocyclic ring. The ascochitine gene cluster also includes a gene encoding a short peptide with a cupin domain (orf2) that is often found in secondary metabolite gene clusters and which function has still to be determined. The sequence is that of Aldehyde dehydrogenase from Didymella fabae (Leaf and pod spot disease fungus).